The primary structure comprises 859 residues: Rod cGMP-specific 3',5'-cyclic phosphodiesterase subunit alpha (859 aa).

Residue glycine 2 is modified to N-acetylglycine. 2 GAF domains span residues glutamine 73–methionine 222 and aspartate 254–valine 431. In terms of domain architecture, PDEase spans glutamate 483–tyrosine 816. The Proton donor role is filled by histidine 559. 4 residues coordinate a divalent metal cation: histidine 563, histidine 599, aspartate 600, and aspartate 720. A disordered region spans residues leucine 823–glutamine 859. Residue cysteine 856 is modified to Cysteine methyl ester. Residue cysteine 856 is the site of S-farnesyl cysteine attachment. A propeptide spans cysteine 857–glutamine 859 (removed in mature form).

Belongs to the cyclic nucleotide phosphodiesterase family. In terms of assembly, oligomer composed of two catalytic chains (alpha and beta), an inhibitory chain (gamma) and the delta chain. Requires a divalent metal cation as cofactor.

It localises to the cell membrane. It is found in the cell projection. The protein resides in the cilium. The protein localises to the photoreceptor outer segment. The catalysed reaction is 3',5'-cyclic GMP + H2O = GMP + H(+). Rod-specific cGMP phosphodiesterase that catalyzes the hydrolysis of 3',5'-cyclic GMP. This protein participates in processes of transmission and amplification of the visual signal. This Mus musculus (Mouse) protein is Rod cGMP-specific 3',5'-cyclic phosphodiesterase subunit alpha.